The chain runs to 365 residues: tRNA/tmRNA (uracil-C(5))-methyltransferase (365 aa).

The S-adenosyl-L-methionine site is built by glutamine 189, tyrosine 217, asparagine 222, glutamate 238, and aspartate 298. Residue cysteine 323 is the Nucleophile of the active site. Catalysis depends on glutamate 357, which acts as the Proton acceptor.

Belongs to the class I-like SAM-binding methyltransferase superfamily. RNA M5U methyltransferase family. TrmA subfamily.

The enzyme catalyses uridine(54) in tRNA + S-adenosyl-L-methionine = 5-methyluridine(54) in tRNA + S-adenosyl-L-homocysteine + H(+). It carries out the reaction uridine(341) in tmRNA + S-adenosyl-L-methionine = 5-methyluridine(341) in tmRNA + S-adenosyl-L-homocysteine + H(+). Functionally, dual-specificity methyltransferase that catalyzes the formation of 5-methyluridine at position 54 (m5U54) in all tRNAs, and that of position 341 (m5U341) in tmRNA (transfer-mRNA). The sequence is that of tRNA/tmRNA (uracil-C(5))-methyltransferase from Shewanella piezotolerans (strain WP3 / JCM 13877).